Here is a 550-residue protein sequence, read N- to C-terminus: ATP synthase subunit alpha (550 aa).

172 to 179 (GDRKTGKT) is a binding site for ATP. Residues 514–550 (EDEQRVNEPPAKPLAGEENRETVTRFRDGTTDRPAES) form a disordered region. The segment covering 528–550 (AGEENRETVTRFRDGTTDRPAES) has biased composition (basic and acidic residues).

The protein belongs to the ATPase alpha/beta chains family. In terms of assembly, F-type ATPases have 2 components, CF(1) - the catalytic core - and CF(0) - the membrane proton channel. CF(1) has five subunits: alpha(3), beta(3), gamma(1), delta(1), epsilon(1). CF(0) has three main subunits: a(1), b(2) and c(9-12). The alpha and beta chains form an alternating ring which encloses part of the gamma chain. CF(1) is attached to CF(0) by a central stalk formed by the gamma and epsilon chains, while a peripheral stalk is formed by the delta and b chains.

It localises to the cell membrane. It carries out the reaction ATP + H2O + 4 H(+)(in) = ADP + phosphate + 5 H(+)(out). In terms of biological role, produces ATP from ADP in the presence of a proton gradient across the membrane. The alpha chain is a regulatory subunit. The protein is ATP synthase subunit alpha of Salinispora arenicola (strain CNS-205).